The following is a 211-amino-acid chain: Troponin I, cardiac muscle (211 aa).

The residue at position 1 (Ala1) is an N-acetylalanine. Positions 1 to 43 are disordered; the sequence is ADESRDAAGEARPAPAPVRRRSSANYRAYATEPHAKSKKKISA. Residue Ser4 is modified to Phosphoserine. Position 22 is a phosphoserine; by PHK, PKA and PKD/PRKD1 (Ser22). Phosphoserine; by PKA and PKD/PRKD1 is present on Ser23. The residue at position 26 (Tyr26) is a Phosphotyrosine. Phosphothreonine; by STK4/MST1 is present on Thr31. Positions 32-79 are involved in binding TNC; that stretch reads EPHAKSKKKISASRKLQLKTLMLQIAKQELEREAEERRGEKGRALSTR. Phosphoserine; by PKC/PRKCE is present on residues Ser42 and Ser44. Thr51 carries the post-translational modification Phosphothreonine; by STK4/MST1. At Ser77 the chain carries Phosphoserine. Position 78 is a phosphothreonine (Thr78). Phosphothreonine; by STK4/MST1 occurs at positions 129 and 143. The segment at 129–150 is involved in binding TNC and actin; that stretch reads TQKIFDLRGKFKRPTLRLRVRI. At Ser151 the chain carries Phosphoserine; by PAK3. At Thr182 the chain carries Phosphothreonine. Phosphoserine is present on Ser200.

The protein belongs to the troponin I family. In terms of assembly, interacts with TRIM63. Binds to actin and tropomyosin. Interacts with STK4/MST1. Phosphorylated at Ser-22 and Ser-23 by PRKD1; phosphorylation reduces myofilament calcium sensitivity. Phosphorylated preferentially at Thr-31. Phosphorylation by STK4/MST1 alters its binding affinity to TNNC1 (cardiac Tn-C) and TNNT2 (cardiac Tn-T). Phosphorylated at Ser-42 and Ser-44 by PRKCE; phosphorylation increases myocardium contractile dysfunction. Ser-22 is one of three sites in the region of residues 1-48 that are phosphorylated by phosphorylase kinase.

In terms of biological role, troponin I is the inhibitory subunit of troponin, the thin filament regulatory complex which confers calcium-sensitivity to striated muscle actomyosin ATPase activity. This Oryctolagus cuniculus (Rabbit) protein is Troponin I, cardiac muscle (TNNI3).